We begin with the raw amino-acid sequence, 97 residues long: Co-chaperonin GroES (97 aa).

The protein belongs to the GroES chaperonin family. In terms of assembly, heptamer of 7 subunits arranged in a ring. Interacts with the chaperonin GroEL.

Its subcellular location is the cytoplasm. In terms of biological role, together with the chaperonin GroEL, plays an essential role in assisting protein folding. The GroEL-GroES system forms a nano-cage that allows encapsulation of the non-native substrate proteins and provides a physical environment optimized to promote and accelerate protein folding. GroES binds to the apical surface of the GroEL ring, thereby capping the opening of the GroEL channel. This is Co-chaperonin GroES from Pseudomonas putida (strain W619).